Here is a 476-residue protein sequence, read N- to C-terminus: Ribulose bisphosphate carboxylase large chain (476 aa).

A propeptide spanning residues 1 to 2 (MS) is cleaved from the precursor. An N-acetylproline modification is found at Pro3. Lys14 is modified (N6,N6,N6-trimethyllysine). Substrate-binding residues include Asn123 and Thr173. Residue Lys175 is the Proton acceptor of the active site. Residue Lys177 participates in substrate binding. Mg(2+)-binding residues include Lys201, Asp203, and Glu204. The residue at position 201 (Lys201) is an N6-carboxylysine. Catalysis depends on His294, which acts as the Proton acceptor. Positions 295, 327, and 379 each coordinate substrate.

The protein belongs to the RuBisCO large chain family. Type I subfamily. As to quaternary structure, heterohexadecamer of 8 large chains and 8 small chains; disulfide-linked. The disulfide link is formed within the large subunit homodimers. Requires Mg(2+) as cofactor. Post-translationally, the disulfide bond which can form in the large chain dimeric partners within the hexadecamer appears to be associated with oxidative stress and protein turnover.

The protein localises to the plastid. The protein resides in the chloroplast. It catalyses the reaction 2 (2R)-3-phosphoglycerate + 2 H(+) = D-ribulose 1,5-bisphosphate + CO2 + H2O. It carries out the reaction D-ribulose 1,5-bisphosphate + O2 = 2-phosphoglycolate + (2R)-3-phosphoglycerate + 2 H(+). Its function is as follows. RuBisCO catalyzes two reactions: the carboxylation of D-ribulose 1,5-bisphosphate, the primary event in carbon dioxide fixation, as well as the oxidative fragmentation of the pentose substrate in the photorespiration process. Both reactions occur simultaneously and in competition at the same active site. This Brachypodium distachyon (Purple false brome) protein is Ribulose bisphosphate carboxylase large chain.